A 161-amino-acid polypeptide reads, in one-letter code: Large ribosomal subunit protein uL15 (161 aa).

The span at 1–10 shows a compositional bias: basic and acidic residues; it reads MKLNELRDNP. The interval 1 to 42 is disordered; that stretch reads MKLNELRDNPGARPKSKRLGRGIGSGKGKTSGKGVKGQKARE. Positions 21-35 are enriched in gly residues; that stretch reads RGIGSGKGKTSGKGV.

The protein belongs to the universal ribosomal protein uL15 family. As to quaternary structure, part of the 50S ribosomal subunit.

Binds to the 23S rRNA. The polypeptide is Large ribosomal subunit protein uL15 (Acidiphilium cryptum (strain JF-5)).